A 137-amino-acid chain; its full sequence is Fluoride-specific ion channel FluC 1 (137 aa).

4 helical membrane passes run 4-24, 37-57, 67-87, and 98-118; these read LIYI…YYLG, LATL…TTYI, VITG…TFSV, and WGIA…MSGL. Gly-77 and Thr-80 together coordinate Na(+).

It belongs to the fluoride channel Fluc/FEX (TC 1.A.43) family.

It is found in the cell membrane. It catalyses the reaction fluoride(in) = fluoride(out). Na(+) is not transported, but it plays an essential structural role and its presence is essential for fluoride channel function. Its function is as follows. Fluoride-specific ion channel. Important for reducing fluoride concentration in the cell, thus reducing its toxicity. The protein is Fluoride-specific ion channel FluC 1 of Bacillus cereus (strain ZK / E33L).